Here is a 412-residue protein sequence, read N- to C-terminus: Zinc finger protein 260 (412 aa).

13 C2H2-type zinc fingers span residues 27–49 (YECN…KKMH), 55–77 (HECT…LRSH), 83–105 (YKCN…QKHH), 136–158 (YACK…EKIH), 164–186 (FECN…QNIH), 192–214 (FKCS…QRIH), 220–242 (YECK…QRSH), 248–270 (YTCK…EKIH), 276–298 (YKCN…HNIH), 304–326 (YECN…VRIH), 332–354 (YECK…MRSH), 360–382 (YGCN…MRIH), and 388–412 (YQCS…IHTH).

The protein belongs to the krueppel C2H2-type zinc-finger protein family. In terms of assembly, binds DNA. Interacts with GATA4.

The protein resides in the nucleus. Functionally, transcription factor that acts as a cardiac regulator and an effector of alpha1-adrenergic signaling. Binds to PE response elements (PERE) present in the promoter of genes such as ANF/NPPA and acts as a direct transcriptional activator of NPPA. Also acts as a cofactor with GATA4, a key cardiac regulator. This chain is Zinc finger protein 260 (ZNF260), found in Homo sapiens (Human).